A 58-amino-acid chain; its full sequence is ATP synthase subunit a (58 aa).

The next 2 membrane-spanning stretches (helical) occupy residues 11–31 and 35–55; these read EIFY…LTGL and VAIL…NDAI.

It belongs to the ATPase A chain family. F-type ATPases have 2 components, CF(1) - the catalytic core - and CF(0) - the membrane proton channel. CF(1) has five subunits: alpha(3), beta(3), gamma(1), delta(1), epsilon(1). CF(0) has three main subunits: a, b and c.

It localises to the mitochondrion inner membrane. In terms of biological role, mitochondrial membrane ATP synthase (F(1)F(0) ATP synthase or Complex V) produces ATP from ADP in the presence of a proton gradient across the membrane which is generated by electron transport complexes of the respiratory chain. F-type ATPases consist of two structural domains, F(1) - containing the extramembraneous catalytic core and F(0) - containing the membrane proton channel, linked together by a central stalk and a peripheral stalk. During catalysis, ATP synthesis in the catalytic domain of F(1) is coupled via a rotary mechanism of the central stalk subunits to proton translocation. Key component of the proton channel; it may play a direct role in the translocation of protons across the membrane. In Brassica tournefortii (Wild turnip), this protein is ATP synthase subunit a (ATP6).